Reading from the N-terminus, the 304-residue chain is MANYEFSQVSGDRPGCRLSRKAQIGLGVGLLVLIALVVGIVVILLRPRSLLVWTGEPTTKHFSDIFLGRCLIYTQILRPEMRDQNCQEILSTFKGAFVSKNPCNITREDYAPLVKLVTQTIPCNKTLFWSKSKHLAHQYTWIQGKMFTLEDTLLGYIADDLRWCGDPSTSDMNYVSCPHWSENCPNNPITVFWKVISQKFAEDACGVVQVMLNGSLREPFYKNSTFGSVEVFSLDPNKVHKLQAWVMHDIEGASSNACSSSSLNELKMIVQKRNMIFACVDNYRPARFLQCVKNPEHPSCRLNT.

The Cytoplasmic segment spans residues 1–21 (MANYEFSQVSGDRPGCRLSRK). A helical; Signal-anchor for type II membrane protein transmembrane segment spans residues 22 to 44 (AQIGLGVGLLVLIALVVGIVVIL). The Extracellular segment spans residues 45 to 304 (LRPRSLLVWT…PEHPSCRLNT (260 aa)). 3 disulfide bridges follow: Cys-70/Cys-86, Cys-103/Cys-184, and Cys-164/Cys-177. Asn-104 is a glycosylation site (N-linked (GlcNAc...) asparagine). Cys-123 is a catalytic residue. Asn-124 carries N-linked (GlcNAc...) asparagine glycosylation. Cys-205 is a catalytic residue. Residues Asn-213 and Asn-223 are each glycosylated (N-linked (GlcNAc...) asparagine). Disulfide bonds link Cys-258–Cys-279 and Cys-291–Cys-300.

The protein belongs to the ADP-ribosyl cyclase family. Homodimer.

It is found in the membrane. The catalysed reaction is NAD(+) = cyclic ADP-beta-D-ribose + nicotinamide + H(+). It carries out the reaction nicotinate + NADP(+) = nicotinate-adenine dinucleotide phosphate + nicotinamide. It catalyses the reaction NAD(+) + H2O = ADP-D-ribose + nicotinamide + H(+). In terms of biological role, synthesizes the second messengers cyclic ADP-ribose (cADPR) and nicotinate-adenine dinucleotide phosphate (NAADP), the former a second messenger for glucose-induced insulin secretion, the latter a Ca(2+) mobilizer. Also has cADPR hydrolase activity. The sequence is that of ADP-ribosyl cyclase/cyclic ADP-ribose hydrolase 1 (Cd38) from Mus musculus (Mouse).